The sequence spans 274 residues: Undecaprenyl-diphosphatase (274 aa).

A run of 7 helical transmembrane segments spans residues 40–60, 90–110, 114–134, 147–167, 190–210, 221–241, and 252–272; these read PGAA…LMFF, WFII…KDVI, FRSL…LGVA, ISLR…IPGV, YAFL…LKDI, PTIV…AWLL, and FVLY…TGVI.

It belongs to the UppP family.

It is found in the cell membrane. It catalyses the reaction di-trans,octa-cis-undecaprenyl diphosphate + H2O = di-trans,octa-cis-undecaprenyl phosphate + phosphate + H(+). Its function is as follows. Catalyzes the dephosphorylation of undecaprenyl diphosphate (UPP). Confers resistance to bacitracin. In Nocardioides sp. (strain ATCC BAA-499 / JS614), this protein is Undecaprenyl-diphosphatase.